The primary structure comprises 164 residues: Putative 4-hydroxy-4-methyl-2-oxoglutarate aldolase (164 aa).

Residues 80-83 (GGNL) and Arg-102 each bind substrate. Position 103 (Asp-103) interacts with a divalent metal cation.

It belongs to the class II aldolase/RraA-like family. In terms of assembly, homotrimer. Requires a divalent metal cation as cofactor.

It catalyses the reaction 4-hydroxy-4-methyl-2-oxoglutarate = 2 pyruvate. The enzyme catalyses oxaloacetate + H(+) = pyruvate + CO2. In terms of biological role, catalyzes the aldol cleavage of 4-hydroxy-4-methyl-2-oxoglutarate (HMG) into 2 molecules of pyruvate. Also contains a secondary oxaloacetate (OAA) decarboxylase activity due to the common pyruvate enolate transition state formed following C-C bond cleavage in the retro-aldol and decarboxylation reactions. The chain is Putative 4-hydroxy-4-methyl-2-oxoglutarate aldolase from Paraburkholderia phytofirmans (strain DSM 17436 / LMG 22146 / PsJN) (Burkholderia phytofirmans).